We begin with the raw amino-acid sequence, 407 residues long: uncharacterized protein (407 aa).

Residue K22 forms a Glycyl lysine isopeptide (Lys-Gly) (interchain with G-Cter in ubiquitin) linkage.

This sequence belongs to the SVF1 family.

The protein resides in the cytoplasm. This is an uncharacterized protein from Saccharomyces cerevisiae (strain ATCC 204508 / S288c) (Baker's yeast).